A 226-amino-acid polypeptide reads, in one-letter code: Pyridoxal 5'-phosphate synthase subunit PdxT (226 aa).

60–62 (GES) lines the L-glutamine pocket. Cys92 acts as the Nucleophile in catalysis. Residues Arg121 and 150–151 (IR) each bind L-glutamine. Active-site charge relay system residues include His191 and Glu193.

Belongs to the glutaminase PdxT/SNO family. In terms of assembly, in the presence of PdxS, forms a dodecamer of heterodimers. Only shows activity in the heterodimer.

It catalyses the reaction aldehydo-D-ribose 5-phosphate + D-glyceraldehyde 3-phosphate + L-glutamine = pyridoxal 5'-phosphate + L-glutamate + phosphate + 3 H2O + H(+). It carries out the reaction L-glutamine + H2O = L-glutamate + NH4(+). Its pathway is cofactor biosynthesis; pyridoxal 5'-phosphate biosynthesis. In terms of biological role, catalyzes the hydrolysis of glutamine to glutamate and ammonia as part of the biosynthesis of pyridoxal 5'-phosphate. The resulting ammonia molecule is channeled to the active site of PdxS. The protein is Pyridoxal 5'-phosphate synthase subunit PdxT of Nocardia farcinica (strain IFM 10152).